The following is a 140-amino-acid chain: Putative nickel-responsive regulator 2 (140 aa).

Residues histidine 81, histidine 92, histidine 94, and cysteine 100 each coordinate Ni(2+).

This sequence belongs to the transcriptional regulatory CopG/NikR family. Requires Ni(2+) as cofactor.

Functionally, transcriptional regulator. This chain is Putative nickel-responsive regulator 2, found in Methanosarcina acetivorans (strain ATCC 35395 / DSM 2834 / JCM 12185 / C2A).